Here is a 272-residue protein sequence, read N- to C-terminus: Shikimate dehydrogenase (NADP(+)) (272 aa).

Shikimate-binding positions include 14 to 16 (SKS) and threonine 61. Lysine 65 acts as the Proton acceptor in catalysis. Glutamate 77 is a binding site for NADP(+). Positions 86 and 102 each coordinate shikimate. Residues 126–130 (GAGGA), 149–154 (NRTVSR), and methionine 213 each bind NADP(+). Residue tyrosine 215 coordinates shikimate. Glycine 237 provides a ligand contact to NADP(+).

Belongs to the shikimate dehydrogenase family. In terms of assembly, homodimer.

It catalyses the reaction shikimate + NADP(+) = 3-dehydroshikimate + NADPH + H(+). Its pathway is metabolic intermediate biosynthesis; chorismate biosynthesis; chorismate from D-erythrose 4-phosphate and phosphoenolpyruvate: step 4/7. In terms of biological role, involved in the biosynthesis of the chorismate, which leads to the biosynthesis of aromatic amino acids. Catalyzes the reversible NADPH linked reduction of 3-dehydroshikimate (DHSA) to yield shikimate (SA). The sequence is that of Shikimate dehydrogenase (NADP(+)) from Escherichia coli O139:H28 (strain E24377A / ETEC).